The following is a 195-amino-acid chain: HTH-type transcriptional regulator BetI (195 aa).

Residues 8–68 form the HTH tetR-type domain; sequence SIRRRQLIDA…ATMRDITSQL (61 aa). The segment at residues 31–50 is a DNA-binding region (H-T-H motif); it reads TIAQIARRAGVSTGIISHYF.

Its pathway is amine and polyamine biosynthesis; betaine biosynthesis via choline pathway [regulation]. Repressor involved in the biosynthesis of the osmoprotectant glycine betaine. It represses transcription of the choline transporter BetT and the genes of BetAB involved in the synthesis of glycine betaine. The protein is HTH-type transcriptional regulator BetI of Escherichia coli O127:H6 (strain E2348/69 / EPEC).